The chain runs to 1373 residues: MVSLRDNIEAQPLSHNRRIRKNFGHINLVADIPNLIEIQKNSYEKNFLQLNIKDSERKNKGLQSILNSIFPISDSSNIANLEFVKYEFDTTKYDVEECSQRSLSYAAPLKVTLRLSIWDIDEDTGTREIKGIKEQEVYMGDIPLMTKNGTFIINGTERVVVSQMHRSPGVFFYHDEGKVHSSGKLLYSARVIPYRGSWLDLEFDAKDVIYFRIDRKRKLYTTTLLRAIGMSTEEIIKFYYNSVTYKLVKNKGWAVKFIPQHITAHRLTSDLVDADTGNILLKAGQKITPRLAKKYFGEGLNNILVAHETLIGKYLSEDLRDPASDEVLAKIGEMITADMLNVINDLKIKNVNVLVINPQSGPYIRNTLFADKNQDREAALCDIFRVLRPGEPVNIEAAESLFYNLFFDTERYDLSEVGRIKMNSRLELNISEEVTVLTIDDIKNIVRVLVELKDGKGIIDDIDHLGNRRVRSVGELIENQFRIGLVRMEKSVIERMSAGDVDTVMPHDLVNSKILVAVVKEFFSTSQLSQFMDQTNPLSEITHKRRLSALGPGGLSRDRAGFEVRDVHPTHYGRICPIETPEGQNIGLINSMATYARINKHGFIESPYRRVKDGCVTDEVVYLSAIEEGKYKIGQANSKINKDGKLQGEFINCRVEGGNFVMVEPYEVDFIDVTPMQVVSVAASLIPFLENDDANRALMGSNMQRQAVPLIKTDAPFVGTGVEGVVAKDSGASVLALHDGIVEQVDSNRIVIRILEQKVDGSPSVDIYNLLKFQKSNHNTCINQKPLVKVGHYVKKNDIIADGPSTDNGEIALGRNVLVAFLPWNGYNFEDSILISERIVKEDVFTSIHIEEFEVIARDTRLGPEEITRDIPNVSEEALRHLDEVGIIYIGAEVQAGDILVGKVTPKSESPITPEEKLLRAIFGEKAFDVKDSSLHVPSGVNGTVVEVRVFSRRGVEKDQRAIAIEKQQIEKFAKDRDDELEIIEHFVFSWLEKLLVGQVIINGPKQATVGQTITTEMLKGLSKGQFWQITVEDANVMNEIEQIKTHYDEKKEALDKRFATKVEKLQSGDDLPQGALKVVKVFIATKHKLQPGDKMAGRHGNKGVISRIVPEEDMPFLEDGTVVDIVLNPLGLPSRMNIGQILETHLGWASINLAKKISTLVKEYKNKHIGIEQIKKFLIELYGENINSILERPEEEIIAFCKKVSKGVHFATPVFDGAKVQDVKDMLKLAGQDPSGQVKLIDGRTGEYFDRLVTVGQKYLLKLHHLVDNKIHSRSIGPYSLVTQQPLGGKSHFGGQRFGEMECWALQAYGAAYTLQEMLTVKSDDVNGRIKTYDSIVRGENNFESGIPESFNVMIKEFRSLCLNVKLEVTSS.

It belongs to the RNA polymerase beta chain family. In terms of assembly, the RNAP catalytic core consists of 2 alpha, 1 beta, 1 beta' and 1 omega subunit. When a sigma factor is associated with the core the holoenzyme is formed, which can initiate transcription.

The enzyme catalyses RNA(n) + a ribonucleoside 5'-triphosphate = RNA(n+1) + diphosphate. DNA-dependent RNA polymerase catalyzes the transcription of DNA into RNA using the four ribonucleoside triphosphates as substrates. This Rickettsia peacockii (strain Rustic) protein is DNA-directed RNA polymerase subunit beta.